The sequence spans 218 residues: Superoxide dismutase [Mn] 2, mitochondrial (218 aa).

A mitochondrion-targeting transit peptide spans M1–S24. Mn(2+)-binding residues include H50, H98, D179, and H183.

This sequence belongs to the iron/manganese superoxide dismutase family. As to quaternary structure, homotetramer. It depends on Mn(2+) as a cofactor. As to expression, expressed in pharynx and rectum. Upon thermal stress, expressed in vulva, body wall muscles and hypodermis.

The protein resides in the mitochondrion. The catalysed reaction is 2 superoxide + 2 H(+) = H2O2 + O2. In terms of biological role, destroys superoxide anion radicals which are normally produced within the cells and which are toxic to biological systems. This is Superoxide dismutase [Mn] 2, mitochondrial (sod-3) from Caenorhabditis elegans.